Reading from the N-terminus, the 347-residue chain is Monopolin complex subunit LRS4 (347 aa).

Positions 46–118 form a coiled coil; sequence KKVVDETLFL…QISVDKHNKE (73 aa). Over residues 112–130 the composition is skewed to basic and acidic residues; the sequence is VDKHNKERTPSTGRDEQQR. Disordered regions lie at residues 112–183 and 208–230; these read VDKH…SLLS and RNDTTSSKIAGKSPSRLSALQKS. 2 stretches are compositionally biased toward polar residues: residues 131 to 140 and 155 to 172; these read NSKAAHTSKP and NNQTNDRGGNDPDSPTSQ. Serine 168 and serine 230 each carry phosphoserine.

In terms of assembly, component of the monopolin complex composed of at least CSM1, LRS4 and MAM1. The complex associates with the kinetochore. Phosphorylated by CDC5. This phosphorylation is required for the location to the kinetochores during late pachytene.

The protein localises to the nucleus. Its subcellular location is the nucleolus. The protein resides in the chromosome. It localises to the centromere. In terms of biological role, component of the monopolin complex which promotes monoorientation during meiosis I, required for chromosome segregation during meiosis. Involved in rDNA silencing. The chain is Monopolin complex subunit LRS4 (LRS4) from Saccharomyces cerevisiae (strain ATCC 204508 / S288c) (Baker's yeast).